The sequence spans 177 residues: ATP synthase subunit delta (177 aa).

Belongs to the ATPase delta chain family. As to quaternary structure, F-type ATPases have 2 components, F(1) - the catalytic core - and F(0) - the membrane proton channel. F(1) has five subunits: alpha(3), beta(3), gamma(1), delta(1), epsilon(1). F(0) has three main subunits: a(1), b(2) and c(10-14). The alpha and beta chains form an alternating ring which encloses part of the gamma chain. F(1) is attached to F(0) by a central stalk formed by the gamma and epsilon chains, while a peripheral stalk is formed by the delta and b chains.

Its subcellular location is the cell inner membrane. F(1)F(0) ATP synthase produces ATP from ADP in the presence of a proton or sodium gradient. F-type ATPases consist of two structural domains, F(1) containing the extramembraneous catalytic core and F(0) containing the membrane proton channel, linked together by a central stalk and a peripheral stalk. During catalysis, ATP synthesis in the catalytic domain of F(1) is coupled via a rotary mechanism of the central stalk subunits to proton translocation. Its function is as follows. This protein is part of the stalk that links CF(0) to CF(1). It either transmits conformational changes from CF(0) to CF(1) or is implicated in proton conduction. The chain is ATP synthase subunit delta from Shewanella frigidimarina (strain NCIMB 400).